The sequence spans 182 residues: ATP synthase subunit b 1 (182 aa).

Residues 24–44 form a helical membrane-spanning segment; sequence FADPAFWVSIAFLMVVGFVYI.

It belongs to the ATPase B chain family. F-type ATPases have 2 components, F(1) - the catalytic core - and F(0) - the membrane proton channel. F(1) has five subunits: alpha(3), beta(3), gamma(1), delta(1), epsilon(1). F(0) has three main subunits: a(1), b(2) and c(10-14). The alpha and beta chains form an alternating ring which encloses part of the gamma chain. F(1) is attached to F(0) by a central stalk formed by the gamma and epsilon chains, while a peripheral stalk is formed by the delta and b chains.

It localises to the cell inner membrane. Its function is as follows. F(1)F(0) ATP synthase produces ATP from ADP in the presence of a proton or sodium gradient. F-type ATPases consist of two structural domains, F(1) containing the extramembraneous catalytic core and F(0) containing the membrane proton channel, linked together by a central stalk and a peripheral stalk. During catalysis, ATP synthesis in the catalytic domain of F(1) is coupled via a rotary mechanism of the central stalk subunits to proton translocation. Functionally, component of the F(0) channel, it forms part of the peripheral stalk, linking F(1) to F(0). The protein is ATP synthase subunit b 1 of Rhodospirillum rubrum (strain ATCC 11170 / ATH 1.1.1 / DSM 467 / LMG 4362 / NCIMB 8255 / S1).